Consider the following 398-residue polypeptide: Succinate--CoA ligase [ADP-forming] subunit beta (398 aa).

The ATP-grasp domain maps to 9 to 253 (KEILNSFGVR…VREENATEVE (245 aa)). Residues K50, 57–59 (GRG), V106, and E116 contribute to the ATP site. Mg(2+) is bound by residues N208 and D222. Substrate is bound by residues N273 and 330–332 (GIV).

The protein belongs to the succinate/malate CoA ligase beta subunit family. As to quaternary structure, heterotetramer of two alpha and two beta subunits. The cofactor is Mg(2+).

The catalysed reaction is succinate + ATP + CoA = succinyl-CoA + ADP + phosphate. It carries out the reaction GTP + succinate + CoA = succinyl-CoA + GDP + phosphate. The protein operates within carbohydrate metabolism; tricarboxylic acid cycle; succinate from succinyl-CoA (ligase route): step 1/1. Succinyl-CoA synthetase functions in the citric acid cycle (TCA), coupling the hydrolysis of succinyl-CoA to the synthesis of either ATP or GTP and thus represents the only step of substrate-level phosphorylation in the TCA. The beta subunit provides nucleotide specificity of the enzyme and binds the substrate succinate, while the binding sites for coenzyme A and phosphate are found in the alpha subunit. The sequence is that of Succinate--CoA ligase [ADP-forming] subunit beta from Christiangramia forsetii (strain DSM 17595 / CGMCC 1.15422 / KT0803) (Gramella forsetii).